Consider the following 166-residue polypeptide: MEWRYFVVIALICPLIIVETLAVSDCVRHVSESARNTVCDVRQYRVTKGVEADRYVQCFMTALGFADESGSIQRSNVLTALDAVETHDGVYTDAVDVCLSKAKKLPGTERSGSFFSCMLRTESAQNFRDAVELQELRVASKWPEGERFDRSKVQLMMRELNSQLRC.

The N-terminal stretch at Met-1–Ala-22 is a signal peptide. Intrachain disulfides connect Cys-26-Cys-58, Cys-39-Cys-166, and Cys-98-Cys-117.

It belongs to the PBP/GOBP family.

Its subcellular location is the secreted. Functionally, in contrast to the related D7 salivary proteins, does not bind biogenic amines such as serotonin, noradrenaline, histamine and adrenaline. It is hypothesized that either D7r5 evolved an as yet unknown function or is becoming a pseudogene. The polypeptide is Short form salivary protein D7R5 (Anopheles gambiae (African malaria mosquito)).